Reading from the N-terminus, the 438-residue chain is Enolase (438 aa).

Position 174 (Gln174) interacts with (2R)-2-phosphoglycerate. Glu216 acts as the Proton donor in catalysis. Mg(2+) is bound by residues Asp253, Glu297, and Asp324. The (2R)-2-phosphoglycerate site is built by Lys349, Arg378, Ser379, and Lys400. Lys349 (proton acceptor) is an active-site residue.

It belongs to the enolase family. In terms of assembly, component of the RNA degradosome, a multiprotein complex involved in RNA processing and mRNA degradation. Mg(2+) serves as cofactor.

Its subcellular location is the cytoplasm. The protein localises to the secreted. It localises to the cell surface. The catalysed reaction is (2R)-2-phosphoglycerate = phosphoenolpyruvate + H2O. The protein operates within carbohydrate degradation; glycolysis; pyruvate from D-glyceraldehyde 3-phosphate: step 4/5. Catalyzes the reversible conversion of 2-phosphoglycerate (2-PG) into phosphoenolpyruvate (PEP). It is essential for the degradation of carbohydrates via glycolysis. This chain is Enolase, found in Psychrobacter arcticus (strain DSM 17307 / VKM B-2377 / 273-4).